A 287-amino-acid chain; its full sequence is Large ribosomal subunit protein uL2 (287 aa).

The segment at 221–287 is disordered; sequence RGSVMNPCDH…SKRSRGGRDS (67 aa). Positions 271–287 are enriched in basic residues; the sequence is LRKRRKTSKRSRGGRDS.

Belongs to the universal ribosomal protein uL2 family. Part of the 50S ribosomal subunit. Forms a bridge to the 30S subunit in the 70S ribosome.

In terms of biological role, one of the primary rRNA binding proteins. Required for association of the 30S and 50S subunits to form the 70S ribosome, for tRNA binding and peptide bond formation. It has been suggested to have peptidyltransferase activity; this is somewhat controversial. Makes several contacts with the 16S rRNA in the 70S ribosome. The polypeptide is Large ribosomal subunit protein uL2 (Synechococcus sp. (strain CC9902)).